Reading from the N-terminus, the 171-residue chain is MKTLKNMRRKNLCITLGLVSLLSRGANAALERPPIKATETIRLTVTNDCPVTIATNSPPNVGVSSTTPIIFNATVTTTEQCAKSGARVWLWGTGAANKWVLEHTTNTKQKYTLNPSIDGNSYFQTPGTNAAIYKNVTTRDRVLKASVKVDPKIQVLIPGEYRMILHAGINF.

The signal sequence occupies residues 1 to 28 (MKTLKNMRRKNLCITLGLVSLLSRGANA).

It localises to the fimbrium. The sequence is that of AAF/I fimbrial subunit (aggA) from Escherichia coli.